Here is a 109-residue protein sequence, read N- to C-terminus: Iron-sulfur cluster assembly protein CyaY (109 aa).

The protein belongs to the frataxin family.

Involved in iron-sulfur (Fe-S) cluster assembly. May act as a regulator of Fe-S biogenesis. The chain is Iron-sulfur cluster assembly protein CyaY from Bordetella petrii (strain ATCC BAA-461 / DSM 12804 / CCUG 43448).